The chain runs to 25 residues: Cysteine protease inhibitor 2 (25 aa).

This sequence belongs to the protease inhibitor I3 (leguminous Kunitz-type inhibitor) family. As to expression, cortex of tuber.

Its function is as follows. Inhibitor of subtilisin. Inhibits moderately trypsin and chymotrypsin (serine proteases). May protect the plant by inhibiting proteases of invading organisms. The sequence is that of Cysteine protease inhibitor 2 from Solanum tuberosum (Potato).